Reading from the N-terminus, the 309-residue chain is 15-cis-phytoene synthase (309 aa).

The segment at 290–309 (LTSRMRAHPPRPAHLWQRPL) is disordered.

The protein belongs to the phytoene/squalene synthase family. It depends on ATP as a cofactor. The cofactor is Mn(2+). Mg(2+) serves as cofactor.

It catalyses the reaction 2 (2E,6E,10E)-geranylgeranyl diphosphate = 15-cis-phytoene + 2 diphosphate. It participates in carotenoid biosynthesis; phytoene biosynthesis. With respect to regulation, inhibited by phosphate ions and squalestatin. Involved in the biosynthesis of carotenoids. Catalyzes the condensation of two molecules of geranylgeranyl diphosphate (GGPP) to give prephytoene diphosphate (PPPP) and the subsequent rearrangement of the cyclopropylcarbinyl intermediate to yield the 15-cis-phytoene isomer. This Pantoea ananas (Erwinia uredovora) protein is 15-cis-phytoene synthase (crtB).